A 294-amino-acid chain; its full sequence is 33 kDa chaperonin (294 aa).

2 cysteine pairs are disulfide-bonded: Cys239–Cys241 and Cys272–Cys275.

Belongs to the HSP33 family. Under oxidizing conditions two disulfide bonds are formed involving the reactive cysteines. Under reducing conditions zinc is bound to the reactive cysteines and the protein is inactive.

The protein resides in the cytoplasm. Its function is as follows. Redox regulated molecular chaperone. Protects both thermally unfolding and oxidatively damaged proteins from irreversible aggregation. Plays an important role in the bacterial defense system toward oxidative stress. In Lacticaseibacillus paracasei (strain ATCC 334 / BCRC 17002 / CCUG 31169 / CIP 107868 / KCTC 3260 / NRRL B-441) (Lactobacillus paracasei), this protein is 33 kDa chaperonin.